A 153-amino-acid polypeptide reads, in one-letter code: MVVKAVCVINGDAKGTVFFEQESSETPVKVSGEVCGLAKCLHGFHVHEFGDNTNGCMSSGPHFNPHGKEHGAPVDENRHLGDLGNIEATGDCPTKVSITDSKITLFGADSIIGRTVVVHADADDLGKGGHELSKSTGNAGARIGCGVIGIAKV.

Cu cation is bound by residues H45, H47, and H62. Residues C56 and C145 are joined by a disulfide bond. 4 residues coordinate Zn(2+): H62, H70, H79, and D82. Residue H119 participates in Cu cation binding.

The protein belongs to the Cu-Zn superoxide dismutase family. In terms of assembly, homodimer. Cu cation is required as a cofactor. Requires Zn(2+) as cofactor.

It is found in the cytoplasm. The enzyme catalyses 2 superoxide + 2 H(+) = H2O2 + O2. Functionally, destroys radicals which are normally produced within the cells and which are toxic to biological systems. This is Superoxide dismutase [Cu-Zn] from Drosophila erecta (Fruit fly).